The following is a 272-amino-acid chain: sn-1 stearoyl-lipid 9-desaturase (272 aa).

Transmembrane regions (helical) follow at residues 11-31 (INWVNTLFFLGLHIGALFAFI) and 39-59 (AVGVALLLYWITGGLGITLGF). The Histidine box-1 motif lies at 60 to 65 (HRLVTH). A Histidine box-2 motif is present at residues 97–101 (HRIHH). The helical transmembrane segment at 160–180 (IALGLLLLYLGGWSFVVWGVF) threads the bilayer. Positions 230-234 (HHAFQ) match the Histidine box-3 motif.

It belongs to the fatty acid desaturase type 2 family. Fe(2+) is required as a cofactor.

It is found in the membrane. It carries out the reaction a 1-octadecanoyl 2-acyl-glycerolipid + 2 reduced [2Fe-2S]-[ferredoxin] + O2 + 2 H(+) = a 1-[(9Z)-octadecenoyl]-2-acyl-glycerolipid + 2 oxidized [2Fe-2S]-[ferredoxin] + 2 H2O. It functions in the pathway lipid metabolism; polyunsaturated fatty acid biosynthesis. Functionally, desaturase involved in fatty acid biosynthesis. Introduces a double bond at carbon 9 of stearoyl groups (18:0) attached to the sn-1 position of the glycerol moiety of membrane glycerolipids. Does not desaturate palmitic acid (16:0), palmitoleic acid (16:1) and cis-vaccenic acid (18:1). The sequence is that of sn-1 stearoyl-lipid 9-desaturase from Anabaena variabilis.